A 289-amino-acid polypeptide reads, in one-letter code: Cell division protein ZipA (289 aa).

Residue Met-1 is a topological domain, periplasmic. A helical transmembrane segment spans residues 2–22 (DIGLREWLIVIGLIVIAGILF). Residues 23-289 (DGWRRMRGGK…HERRSLMQKR (267 aa)) are Cytoplasmic-facing. A disordered region spans residues 65-141 (HREPSFDEQD…KEREKAPAVA (77 aa)). The segment covering 81-99 (RETKERKGGKRQEEPRQGD) has biased composition (basic and acidic residues). The span at 100–114 (LDLDEGLALEADPSD) shows a compositional bias: acidic residues.

It belongs to the ZipA family. As to quaternary structure, interacts with FtsZ via their C-terminal domains.

It is found in the cell inner membrane. Functionally, essential cell division protein that stabilizes the FtsZ protofilaments by cross-linking them and that serves as a cytoplasmic membrane anchor for the Z ring. Also required for the recruitment to the septal ring of downstream cell division proteins. In Pseudomonas aeruginosa (strain UCBPP-PA14), this protein is Cell division protein ZipA.